A 3357-amino-acid chain; its full sequence is Versican core protein (3357 aa).

A signal peptide spans 1-23 (MLINMKGILWMCSTLLLTHALHQ). Residues 24–146 (AKMETSPPVK…EDTQDTMSLA (123 aa)) form the Ig-like V-type domain. 5 cysteine pairs are disulfide-bonded: C44–C130, C172–C243, C196–C217, C270–C333, and C294–C315. A glycan (N-linked (GlcNAc...) asparagine) is linked at N57. Link domains follow at residues 150-245 (VVFH…YCYV) and 251-347 (DVFH…YCFK). Residues N330, N351, and N441 are each glycosylated (N-linked (GlcNAc...) asparagine). The segment at 348 to 1308 (PKQNISEATT…IIEVRENKTG (961 aa)) is GAG-alpha (glucosaminoglycan attachment domain). A compositionally biased stretch (basic and acidic residues) spans 625–634 (EPKTNGKVTE). Residues 625-646 (EPKTNGKVTEDEFGQSQPTTTF) are disordered. Residue S660 is glycosylated (O-linked (Xyl...) (chondroitin sulfate) serine). 2 disordered regions span residues 801 to 863 (WPGD…KPLE) and 881 to 908 (TSTSIGSAEKSASGEPTTGDRFLPTTST). N-linked (GlcNAc...) asparagine glycosylation occurs at N807. 2 N-linked (GlcNAc...) asparagine glycosylation sites follow: N914 and N951. Disordered regions lie at residues 1010-1088 (SPGA…YPPG) and 1252-1288 (DHMTSKPPVTQPTRPSVVERKTTSKTQELSTSTPAAG). 2 stretches are compositionally biased toward polar residues: residues 1017–1042 (TGVSQGETQEEPQTPGSPFPTFSSTA) and 1275–1286 (SKTQELSTSTPA). N-linked (GlcNAc...) asparagine glycans are attached at residues N1305 and N1371. Residues 1309–3051 (RLSDMIVSGH…VEGTAVYLPG (1743 aa)) are GAG-beta. A compositionally biased stretch (basic and acidic residues) spans 1396 to 1406 (DPEAAEARRGQ). Disordered regions lie at residues 1396–1421 (DPEAAEARRGQYESVAPSQNFPDSSA) and 1458–1524 (TYPE…AIEQ). Polar residues-rich tracts occupy residues 1411-1421 (APSQNFPDSSA) and 1487-1498 (WSESITESSPNL). O-linked (Xyl...) (chondroitin sulfate) serine glycans are attached at residues S1517 and S1599. The segment at 1664–1705 (LPSPDARPTTVWNSNSTSEWVSDKSFEGRKKKENEDEEGAVN) is disordered. A compositionally biased stretch (polar residues) spans 1673 to 1683 (TVWNSNSTSEW). N-linked (GlcNAc...) asparagine glycosylation occurs at N1678. Residues 1684 to 1697 (VSDKSFEGRKKKEN) show a composition bias toward basic and acidic residues. 2 O-linked (Xyl...) (chondroitin sulfate) serine glycosylation sites follow: S1907 and S1931. Residues 1926–1965 (VGMGGSDDERVRDTQTSSSIPTTSDNIYPVPDSKGPDSTV) are disordered. The segment covering 1939-1951 (TQTSSSIPTTSDN) has biased composition (polar residues). Residue N2053 is glycosylated (N-linked (GlcNAc...) asparagine). O-linked (Xyl...) (chondroitin sulfate) serine glycans are attached at residues S2219 and S2226. The N-linked (GlcNAc...) asparagine glycan is linked to N2243. Polar residues predominate over residues 2308-2322 (TLSHTGTEEPTTSTL). Disordered regions lie at residues 2308-2374 (TLSH…ATSP) and 2475-2494 (YPTSTLPSTEPYKSPSEGIE). Residue N2361 is glycosylated (N-linked (GlcNAc...) asparagine). Residues 2475–2486 (YPTSTLPSTEPY) are compositionally biased toward low complexity. 2 positions are modified to phosphoserine: S2585 and S2586. Residue N2626 is glycosylated (N-linked (GlcNAc...) asparagine). S2696, S2697, and S2741 each carry an O-linked (Xyl...) (chondroitin sulfate) serine glycan. The segment at 2853 to 2908 (LGGNVHRTEPPSMSRDPALDVSEDESKHKLLEELETSPTKPETSQDFPNKAKDHIP) is disordered. Residues 2888–2899 (TSPTKPETSQDF) show a composition bias toward polar residues. N3029 carries N-linked (GlcNAc...) asparagine glycosylation. The region spanning 3051-3087 (GPDLCKTNPCLNGGTCYPTETSYVCTCAPGYSGDQCE) is the EGF-like 1 domain. 11 cysteine pairs are disulfide-bonded: C3055–C3066, C3060–C3075, C3077–C3086, C3093–C3104, C3098–C3113, C3115–C3124, C3131–C3142, C3159–C3251, C3227–C3243, C3258–C3301, and C3287–C3314. Residues 3089-3125 (DFDECHSNPCRNGATCVDGFNTFRCLCLPSYVGALCE) form the EGF-like 2; calcium-binding domain. A C-type lectin domain is found at 3138–3252 (FQGQCYKYFA…CNYHLTYTCK (115 aa)). A Sushi domain is found at 3256–3316 (VACGQPPVVE…WAMPKITCMN (61 aa)). Residues N3331 and N3341 are each glycosylated (N-linked (GlcNAc...) asparagine). The segment covering 3331–3342 (NSSSAKDNSINT) has biased composition (polar residues). Positions 3331 to 3357 (NSSSAKDNSINTSKHEHRWSRRQETRR) are disordered.

The protein belongs to the aggrecan/versican proteoglycan family. As to quaternary structure, interacts with FBLN1. Post-translationally, phosphorylated by FAM20C in the extracellular medium. In terms of processing, proteolytically cleaved by ADAMTS5 and ADAMTS15 in the pericellular matrix surrounding myoblasts, facilitating myoblast contact and fusion which is required for skeletal muscle development and regeneration. In terms of tissue distribution, expressed in the retina (at protein level). Isoform V2: Only expressed in brain.

It localises to the secreted. The protein resides in the extracellular space. Its subcellular location is the extracellular matrix. The protein localises to the cell projection. It is found in the cilium. It localises to the photoreceptor outer segment. The protein resides in the interphotoreceptor matrix. May play a role in intercellular signaling and in connecting cells with the extracellular matrix. May take part in the regulation of cell motility, growth and differentiation. Binds hyaluronic acid. The chain is Versican core protein (Vcan) from Mus musculus (Mouse).